A 573-amino-acid polypeptide reads, in one-letter code: Multidrug and toxin extrusion protein 2 (573 aa).

The Cytoplasmic segment spans residues 1-46 (MEPAEDSLGATIQPPELVRVPRGRSLRILLGLRGALSPDVRREAAA). The chain crosses the membrane as a helical span at residues 47-67 (LVALAGPVFLAQLMIFLISIV). The Extracellular portion of the chain corresponds to 68-81 (SSIFCGHLGKVELD). Residues 82 to 102 (AVTLAVSVVNVTGISVGTGLA) form a helical membrane-spanning segment. Topologically, residues 103–122 (SACDTLMSQSFGGKNLKRVG) are cytoplasmic. The helical transmembrane segment at 123-143 (VILQRGILILLLCCFPCWAIF) threads the bilayer. Over 144–161 (LNTERLLLLLRQDPDVAR) the chain is Extracellular. A helical transmembrane segment spans residues 162-182 (LAQVYVMICIPALPAAFLFQL). Residues 183 to 196 (QTRYLQSQGIIMPQ) are Cytoplasmic-facing. The helical transmembrane segment at 197–217 (VIVGIAANVVNVGMNAFLLYA) threads the bilayer. Residues 218-225 (LDLGVVGS) are Extracellular-facing. The chain crosses the membrane as a helical span at residues 226 to 246 (AWANTTSQFFLSALLFLYVWW). At 247-266 (KRIHIHTWGGWTRECFQEWS) the chain is on the cytoplasmic side. A helical transmembrane segment spans residues 267–286 (SYTRLAIPSMFMVCIEWWTF). The Extracellular segment spans residues 287 to 304 (EIGTFLAGLVNVTELGAQ). A helical transmembrane segment spans residues 305 to 325 (AVIYELASVAYMVPFGFGVAA). Residues 326 to 345 (SVRVGNALGAGNADQARCSC) lie on the Cytoplasmic side of the membrane. The helical transmembrane segment at 346-366 (TTVLLCAGVCALLVGILLAAL) threads the bilayer. The Extracellular portion of the chain corresponds to 367–379 (KDVVAYIFTNDKD). Residues 380 to 400 (IISLVSQVMPIFAPFHLFDAL) traverse the membrane as a helical segment. Topologically, residues 401 to 415 (AGTCGGVLRGTGKQK) are cytoplasmic. A helical membrane pass occupies residues 416 to 436 (IGAVLNTIGYYGFGFPIGVSL). At 437–443 (MFAAKLG) the chain is on the extracellular side. A helical membrane pass occupies residues 444–464 (IIGLWAGLIVCVSFQAFSYLI). The Cytoplasmic segment spans residues 465-545 (YILRTNWSRV…VGEVLTGRQL (81 aa)). Residues 546–566 (VFYRGMALTVSVAVLIAGIVV) traverse the membrane as a helical segment. Topologically, residues 567-573 (RVFNDRG) are extracellular.

This sequence belongs to the multi antimicrobial extrusion (MATE) (TC 2.A.66.1) family. In terms of tissue distribution, expressed in testis; especially in testicular Leydig cells.

Its subcellular location is the cell membrane. Functionally, multidrug efflux pump that functions as a H(+)/organic cation antiporter. May mediate testosterone efflux from the Leydig cells in the testes. The polypeptide is Multidrug and toxin extrusion protein 2 (Slc47a2) (Mus musculus (Mouse)).